The chain runs to 265 residues: Polyphosphate glucokinase (265 aa).

Positions 1-18 (MTSTGPETSETPGATTQR) are enriched in polar residues. A disordered region spans residues 1 to 22 (MTSTGPETSETPGATTQRHGFG). 24–29 (DVGGSG) is a binding site for ATP.

It belongs to the ROK (NagC/XylR) family. In terms of assembly, homodimer.

The catalysed reaction is [phosphate](n) + D-glucose = [phosphate](n-1) + D-glucose 6-phosphate + H(+). The enzyme catalyses D-glucose + ATP = D-glucose 6-phosphate + ADP + H(+). Its function is as follows. Catalyzes the phosphorylation of glucose using polyphosphate or ATP as the phosphoryl donor. Polyphosphate, rather than ATP, seems to be the major phosphate donor for the enzyme in M.tuberculosis. GTP, UTP and CTP can replace ATP as phosphoryl donor. The polypeptide is Polyphosphate glucokinase (ppgK) (Mycobacterium tuberculosis (strain ATCC 25177 / H37Ra)).